Reading from the N-terminus, the 170-residue chain is Adenine phosphoribosyltransferase (170 aa).

The protein belongs to the purine/pyrimidine phosphoribosyltransferase family. In terms of assembly, homodimer.

It is found in the cytoplasm. The catalysed reaction is AMP + diphosphate = 5-phospho-alpha-D-ribose 1-diphosphate + adenine. It participates in purine metabolism; AMP biosynthesis via salvage pathway; AMP from adenine: step 1/1. Catalyzes a salvage reaction resulting in the formation of AMP, that is energically less costly than de novo synthesis. This is Adenine phosphoribosyltransferase from Geobacillus sp. (strain WCH70).